We begin with the raw amino-acid sequence, 253 residues long: Triosephosphate isomerase (253 aa).

9 to 11 (NWK) is a substrate binding site. His-97 serves as the catalytic Electrophile. Glu-169 acts as the Proton acceptor in catalysis. Substrate is bound by residues Gly-175, Ser-215, and 236 to 237 (GG).

Belongs to the triosephosphate isomerase family. Homodimer.

The protein resides in the cytoplasm. It catalyses the reaction D-glyceraldehyde 3-phosphate = dihydroxyacetone phosphate. The protein operates within carbohydrate biosynthesis; gluconeogenesis. Its pathway is carbohydrate degradation; glycolysis; D-glyceraldehyde 3-phosphate from glycerone phosphate: step 1/1. Involved in the gluconeogenesis. Catalyzes stereospecifically the conversion of dihydroxyacetone phosphate (DHAP) to D-glyceraldehyde-3-phosphate (G3P). This chain is Triosephosphate isomerase, found in Staphylococcus aureus (strain Mu50 / ATCC 700699).